The sequence spans 433 residues: 2,2-dialkylglycine decarboxylase (433 aa).

Lysine 272 carries the post-translational modification N6-(pyridoxal phosphate)lysine.

The protein belongs to the class-III pyridoxal-phosphate-dependent aminotransferase family. In terms of assembly, homotetramer. It depends on pyridoxal 5'-phosphate as a cofactor.

The enzyme catalyses 2,2-dialkylglycine + pyruvate + H(+) = dialkyl ketone + L-alanine + CO2. Its function is as follows. The dialkylglycine decarboxylase is of interest because it normally catalyzes both decarboxylation and amino transfer. It may be more properly described as a decarboxylating aminotransferase rather than an aminotransferring decarboxylase. This is 2,2-dialkylglycine decarboxylase (dgdA) from Burkholderia cepacia (Pseudomonas cepacia).